A 358-amino-acid chain; its full sequence is Protein-L-isoaspartate O-methyltransferase domain-containing protein 1 (358 aa).

A lipid anchor (N-myristoyl glycine) is attached at Gly-2. The active site involves Ser-64. AdoMet binding motif regions lie at residues 85-94, 160-164, and 181-191; these read LNLGSGTGYL, YDRIY, and LKVGGILVMPI. The tract at residues 240-250 is BC-box; it reads VRNLQDLARIY. A disordered region spans residues 300-339; sequence PLDSEEDERMEDDNKEEEDKDHSEALKPEEPPRNLLREKI. A compositionally biased stretch (acidic residues) spans 302–318; that stretch reads DSEEDERMEDDNKEEED. Residues 319-339 show a composition bias toward basic and acidic residues; that stretch reads KDHSEALKPEEPPRNLLREKI. The CUL-box stretch occupies residues 342–345; that stretch reads LPLP.

The protein belongs to the methyltransferase superfamily. L-isoaspartyl/D-aspartyl protein methyltransferase family. Component of the probable ECS(PCMTD1) E3 ubiquitin-protein ligase complex, at least composed of CUL5, ELOB, ELOC, RBX2 and PCMTD1.

It localises to the cytoplasm. It is found in the membrane. Substrate recognition component of an ECS (Elongin BC-CUL5-SOCS-box protein) E3 ubiquitin ligase complex which mediates the ubiquitination and subsequent proteasomal degradation of target proteins. Specifically binds to the methyltransferase cofactor S-adenosylmethionine (AdoMet) via the N-terminal AdoMet binding motif, but does not display methyltransferase activity. May provide an alternate maintenance pathway for modified proteins by acting as a damage-specific E3 ubiquitin ligase adaptor protein. The polypeptide is Protein-L-isoaspartate O-methyltransferase domain-containing protein 1 (PCMTD1) (Gallus gallus (Chicken)).